A 198-amino-acid polypeptide reads, in one-letter code: Na(+)-translocating NADH-quinone reductase subunit E (198 aa).

6 consecutive transmembrane segments (helical) span residues 11–31 (AVFV…FLAV), 35–55 (VSTA…SVPV), 77–97 (FLNF…LEMI), 110–130 (GIFL…SFMV), 140–160 (VVYG…MAGI), and 176–196 (LGIT…FSGV).

Belongs to the NqrDE/RnfAE family. In terms of assembly, composed of six subunits; NqrA, NqrB, NqrC, NqrD, NqrE and NqrF.

It is found in the cell inner membrane. The enzyme catalyses a ubiquinone + n Na(+)(in) + NADH + H(+) = a ubiquinol + n Na(+)(out) + NAD(+). NQR complex catalyzes the reduction of ubiquinone-1 to ubiquinol by two successive reactions, coupled with the transport of Na(+) ions from the cytoplasm to the periplasm. NqrA to NqrE are probably involved in the second step, the conversion of ubisemiquinone to ubiquinol. The chain is Na(+)-translocating NADH-quinone reductase subunit E from Serratia proteamaculans (strain 568).